The chain runs to 160 residues: Small ribosomal subunit protein uS9 (160 aa).

This sequence belongs to the universal ribosomal protein uS9 family.

This Mesorhizobium japonicum (strain LMG 29417 / CECT 9101 / MAFF 303099) (Mesorhizobium loti (strain MAFF 303099)) protein is Small ribosomal subunit protein uS9.